Reading from the N-terminus, the 423-residue chain is Gamma-glutamyl phosphate reductase (423 aa).

The protein belongs to the gamma-glutamyl phosphate reductase family.

It is found in the cytoplasm. The catalysed reaction is L-glutamate 5-semialdehyde + phosphate + NADP(+) = L-glutamyl 5-phosphate + NADPH + H(+). The protein operates within amino-acid biosynthesis; L-proline biosynthesis; L-glutamate 5-semialdehyde from L-glutamate: step 2/2. In terms of biological role, catalyzes the NADPH-dependent reduction of L-glutamate 5-phosphate into L-glutamate 5-semialdehyde and phosphate. The product spontaneously undergoes cyclization to form 1-pyrroline-5-carboxylate. This Burkholderia ambifaria (strain MC40-6) protein is Gamma-glutamyl phosphate reductase.